A 147-amino-acid polypeptide reads, in one-letter code: Hemoglobin subunit gamma (147 aa).

The Globin domain occupies 3–147 (NFTAEDKAAI…VASALASRYH (145 aa)). 2 residues coordinate heme b: His64 and His93.

Belongs to the globin family. Heterotetramer of two alpha chains and two gamma chains in fetal hemoglobin (Hb F). In terms of tissue distribution, red blood cells.

In terms of biological role, gamma chains make up the fetal hemoglobin F, in combination with alpha chains. This Callithrix jacchus (White-tufted-ear marmoset) protein is Hemoglobin subunit gamma (HBG1).